Here is a 162-residue protein sequence, read N- to C-terminus: Regulatory protein RecX (162 aa).

Belongs to the RecX family.

It is found in the cytoplasm. Functionally, modulates RecA activity. The polypeptide is Regulatory protein RecX (Xanthomonas oryzae pv. oryzae (strain PXO99A)).